Consider the following 594-residue polypeptide: Aspartate--tRNA(Asp/Asn) ligase (594 aa).

L-aspartate is bound at residue Glu-175. Positions 199 to 202 (QQLK) are aspartate. Arg-221 contributes to the L-aspartate binding site. ATP-binding positions include 221-223 (RDE) and Gln-230. His-450 serves as a coordination point for L-aspartate. Glu-485 is an ATP binding site. Arg-492 is a binding site for L-aspartate. Position 537-540 (537-540 (GIDR)) interacts with ATP.

The protein belongs to the class-II aminoacyl-tRNA synthetase family. Type 1 subfamily. In terms of assembly, homodimer.

Its subcellular location is the cytoplasm. It catalyses the reaction tRNA(Asx) + L-aspartate + ATP = L-aspartyl-tRNA(Asx) + AMP + diphosphate. Functionally, aspartyl-tRNA synthetase with relaxed tRNA specificity since it is able to aspartylate not only its cognate tRNA(Asp) but also tRNA(Asn). Reaction proceeds in two steps: L-aspartate is first activated by ATP to form Asp-AMP and then transferred to the acceptor end of tRNA(Asp/Asn). This chain is Aspartate--tRNA(Asp/Asn) ligase, found in Herpetosiphon aurantiacus (strain ATCC 23779 / DSM 785 / 114-95).